A 2531-amino-acid polypeptide reads, in one-letter code: Putative neurobeachin homolog (2531 aa).

Composition is skewed to acidic residues over residues 1 to 10, 26 to 35, and 62 to 74; these read MDISETEYND, EDEVNDEESN, and EPSDDQQNVEESE. Disordered regions lie at residues 1–101, 1363–1398, 1420–1440, and 1642–1670; these read MDIS…SPPP, NDGDHASIKNGSDHSENGADEETEEKGEQGQGDNGG, EELKKMHQSNGRRPSTLMPPQ, and RFVPNPYGSRHEEANLPEGEKNEEPEISE. A compositionally biased stretch (basic and acidic residues) spans 1363–1379; that stretch reads NDGDHASIKNGSDHSEN. Positions 1427–1440 are enriched in polar residues; sequence QSNGRRPSTLMPPQ. Over residues 1650–1670 the composition is skewed to basic and acidic residues; the sequence is SRHEEANLPEGEKNEEPEISE. The 109-residue stretch at 1714 to 1822 folds into the BEACH-type PH domain; the sequence is PSSQSACFST…TVRKVVYQLP (109 aa). In terms of domain architecture, BEACH spans 1841-2130; the sequence is MTPRQLFKHS…QLLAEAHPPR (290 aa). 4 WD repeats span residues 2289-2332, 2350-2389, 2429-2468, and 2471-2510; these read GHGD…GFIA, GHEASISALCVSAEHGLVVSGCEDGVILIHTTASDLLRRI, LSEEKIECVTVTRDGEFAVTGAVNGRITIWRMFPLNKLYT, and PLNSAVRSVAVVASHRFILGGLDSGAIVVFNADFNRWHYE.

Belongs to the WD repeat neurobeachin family. As to quaternary structure, interacts with RII subunit of PKA.

It localises to the cytoplasm. The protein resides in the membrane. It is found in the nucleus. In terms of biological role, binds to type II regulatory subunits of protein kinase A and anchors/targets them to the membrane. May anchor the kinase to cytoskeletal and/or organelle-associated proteins. Regulates endosomal traffic in polarized epithelial cells such as the vulval precursor cells and intestinal cells. Thought to act as a negative regulator of lin-12 activity in vulval precursor cells. May have a role in the internalization process from basolateral surface of polarized epithelial cells. This is Putative neurobeachin homolog from Caenorhabditis briggsae.